We begin with the raw amino-acid sequence, 393 residues long: Prokineticin receptor 1 (393 aa).

Residues 1 to 62 (METTVGTLGE…TNSRTFFAAK (62 aa)) are Extracellular-facing. Asn11 carries an N-linked (GlcNAc...) asparagine glycan. A helical transmembrane segment spans residues 63–83 (IVIGMALVGIMLVCGIGNFIF). Over 84-98 (ITALARYKKLRNLTN) the chain is Cytoplasmic. A helical transmembrane segment spans residues 99–119 (LLIANLAISDFLVAIVCCPFE). Residues 120–145 (MDYYVVRQLSWEHGHVLCASVNYLRT) are Extracellular-facing. Cys137 and Cys217 form a disulfide bridge. The helical transmembrane segment at 146–166 (VSLYVSTNALLAIAIDRYLAI) threads the bilayer. Residues 167–179 (VHPLRPRMKCQTA) are Cytoplasmic-facing. A helical membrane pass occupies residues 180-200 (AGLIFLVWSVSILIAIPAAYF). Residues 201-232 (TTETVLVIVESQEKIFCGQIWPVDQQFYYRSY) lie on the Extracellular side of the membrane. Residues 233 to 253 (FLLVFGLEFVGPVIAMTLCYA) form a helical membrane-spanning segment. The Cytoplasmic portion of the chain corresponds to 254 to 282 (RVSRELWFKAVPGFQTEQIRRRLRCRRRT). The helical transmembrane segment at 283 to 303 (VLGLVCVLSAYVLCWAPFYGF) threads the bilayer. Over 304 to 322 (TIVRDFFPSVFVKEKHYLT) the chain is Extracellular. The chain crosses the membrane as a helical span at residues 323-343 (AFYVVECIAMSNSMINTLCFV). Topologically, residues 344-393 (TVRNNTSKYLKRILRLQWRASPSGSKASADLDLRTTGIPATEEVDCIRLK) are cytoplasmic.

It belongs to the G-protein coupled receptor 1 family. Widely expressed in peripheral tissues with the highest level in the spleen and moderate levels in the adipose tissues, thymus, lung, kidney, testis, uterus and small intestine.

Its subcellular location is the cell membrane. Its function is as follows. Receptor for prokineticin 1. Exclusively coupled to the G(q) subclass of heteromeric G proteins. Activation leads to mobilization of calcium, stimulation of phosphoinositide turnover and activation of p44/p42 mitogen-activated protein kinase. May play a role during early pregnancy. This Rattus norvegicus (Rat) protein is Prokineticin receptor 1 (Prokr1).